A 422-amino-acid chain; its full sequence is Probable ornithine aminotransferase, mitochondrial (422 aa).

The residue at position 273 (K273) is an N6-(pyridoxal phosphate)lysine.

This sequence belongs to the class-III pyridoxal-phosphate-dependent aminotransferase family. It depends on pyridoxal 5'-phosphate as a cofactor.

The protein resides in the mitochondrion matrix. The enzyme catalyses a 2-oxocarboxylate + L-ornithine = L-glutamate 5-semialdehyde + an L-alpha-amino acid. It functions in the pathway amino-acid biosynthesis; L-proline biosynthesis; L-glutamate 5-semialdehyde from L-ornithine: step 1/1. In Caenorhabditis elegans, this protein is Probable ornithine aminotransferase, mitochondrial.